Reading from the N-terminus, the 154-residue chain is Superoxide dismutase [Cu-Zn] (154 aa).

The Cu cation site is built by H47, H49, and H64. C58 and C147 are oxidised to a cystine. H64, H72, H81, and D84 together coordinate Zn(2+). Residue H121 participates in Cu cation binding. R144 contributes to the substrate binding site.

It belongs to the Cu-Zn superoxide dismutase family. Homodimer. The cofactor is Cu cation. It depends on Zn(2+) as a cofactor.

It is found in the cytoplasm. It localises to the mitochondrion. The protein resides in the cell membrane. The catalysed reaction is 2 superoxide + 2 H(+) = H2O2 + O2. Its function is as follows. Destroys radicals which are normally produced within the cells and which are toxic to biological systems. Destroys radicals produced by host defense mechanisms. The sequence is that of Superoxide dismutase [Cu-Zn] from Cryptococcus neoformans var. grubii serotype A (strain H99 / ATCC 208821 / CBS 10515 / FGSC 9487) (Filobasidiella neoformans var. grubii).